The chain runs to 437 residues: Adenylosuccinate synthetase (437 aa).

GTP contacts are provided by residues 12–18 (GDEGKGK) and 40–42 (GHT). The active-site Proton acceptor is Asp13. 2 residues coordinate Mg(2+): Asp13 and Gly40. IMP-binding positions include 13 to 16 (DEGK), 38 to 41 (NAGH), Thr128, Arg142, Gln223, Thr238, and Arg302. The Proton donor role is filled by His41. 298–304 (TTTGRRR) contributes to the substrate binding site. Residues Arg304, 330–332 (KLD), and 412–414 (SLG) contribute to the GTP site.

The protein belongs to the adenylosuccinate synthetase family. As to quaternary structure, homodimer. Mg(2+) serves as cofactor.

It is found in the cytoplasm. The enzyme catalyses IMP + L-aspartate + GTP = N(6)-(1,2-dicarboxyethyl)-AMP + GDP + phosphate + 2 H(+). It participates in purine metabolism; AMP biosynthesis via de novo pathway; AMP from IMP: step 1/2. In terms of biological role, plays an important role in the de novo pathway of purine nucleotide biosynthesis. Catalyzes the first committed step in the biosynthesis of AMP from IMP. The sequence is that of Adenylosuccinate synthetase from Prochlorococcus marinus (strain MIT 9211).